We begin with the raw amino-acid sequence, 528 residues long: GMP synthase [glutamine-hydrolyzing] (528 aa).

The region spanning alanine 13–aspartate 204 is the Glutamine amidotransferase type-1 domain. Cysteine 90 functions as the Nucleophile in the catalytic mechanism. Catalysis depends on residues histidine 178 and glutamate 180. Residues tryptophan 205–arginine 403 enclose the GMPS ATP-PPase domain. Serine 232–serine 238 lines the ATP pocket.

As to quaternary structure, homodimer.

The enzyme catalyses XMP + L-glutamine + ATP + H2O = GMP + L-glutamate + AMP + diphosphate + 2 H(+). It participates in purine metabolism; GMP biosynthesis; GMP from XMP (L-Gln route): step 1/1. Functionally, catalyzes the synthesis of GMP from XMP. This chain is GMP synthase [glutamine-hydrolyzing], found in Prochlorococcus marinus (strain NATL1A).